The chain runs to 331 residues: Probable cytosolic iron-sulfur protein assembly protein Ciao1 (331 aa).

WD repeat units follow at residues 12-51, 57-96, 97-136, 142-181, 188-227, 246-285, and 297-331; these read GHKG…WTTK, GHKR…ATLE, GHEN…EFEC, AHTQ…SDWD, SHTS…NEAG, QHSR…KRDE, and AHEQ…KLQE.

It belongs to the WD repeat CIA1 family.

Functionally, essential component of the cytosolic iron-sulfur (Fe/S) protein assembly machinery. Required for the maturation of extramitochondrial Fe/S proteins. This chain is Probable cytosolic iron-sulfur protein assembly protein Ciao1, found in Drosophila grimshawi (Hawaiian fruit fly).